Consider the following 966-residue polypeptide: Mitogen-activated protein kinase kinase kinase 13 (966 aa).

Disordered stretches follow at residues 1 to 22 (MANFQEHLSCSSSPHLPFSESK), 30 to 49 (ELTAMGNHPSPKLLEDQQEK), and 90 to 114 (HDESETAVSQGNSNTVDGESTSGTE). Positions 95–113 (TAVSQGNSNTVDGESTSGT) are enriched in polar residues. In terms of domain architecture, Protein kinase spans 168 to 409 (ISELQWLGSG…FRQTLMHLDI (242 aa)). Residues 174-182 (LGSGAQGAV) and Lys195 each bind ATP. Catalysis depends on Asp279, which acts as the Proton acceptor. Leucine-zipper stretches follow at residues 433-454 (VKKHFEKIKSEGTCIHRLDEEL) and 486-507 (LSAIMLQLEMREKELIKREQAV). 4 disordered regions span residues 534 to 599 (KRKG…RGSH), 611 to 655 (AQEN…HHPR), 744 to 834 (DIPS…RRQR), and 846 to 908 (STFS…GLSD). The span at 567 to 581 (SPLSGSPKMSTSSSK) shows a compositional bias: low complexity. Positions 582-594 (SRYRSKPRHRRGN) are enriched in basic residues. 2 stretches are compositionally biased toward polar residues: residues 611 to 629 (AQENSPHPTYLHQAQSQYP) and 785 to 795 (RSESSLGTSHL). Acidic residues predominate over residues 814-827 (DSSEEEEGEVDSEV). Positions 815 to 828 (SSEEEEGEVDSEVE) are acidic. The span at 846-855 (STFSSENFSV) shows a compositional bias: polar residues. Residues 873–887 (LADKLEDRLAEKLDD) are compositionally biased toward basic and acidic residues.

This sequence belongs to the protein kinase superfamily. STE Ser/Thr protein kinase family. MAP kinase kinase kinase subfamily. Homodimer; forms dimers through the leucine-zipper motif. Interacts with the C-terminus of MAPK8IP1 through the kinase catalytic domain. Binds PRDX3. Associates with the IKK complex through the kinase domain. The cofactor is Mg(2+). Post-translationally, autophosphorylated on serine and threonine residues. As to expression, expressed in the adult brain, liver, placenta and pancreas, with expression strongest in the pancreas.

The protein resides in the cytoplasm. Its subcellular location is the membrane. The catalysed reaction is L-seryl-[protein] + ATP = O-phospho-L-seryl-[protein] + ADP + H(+). The enzyme catalyses L-threonyl-[protein] + ATP = O-phospho-L-threonyl-[protein] + ADP + H(+). Its activity is regulated as follows. Activated by autophosphorylation and homodimerization. Its function is as follows. Activates the JUN N-terminal pathway through activation of the MAP kinase kinase MAP2K7. Acts synergistically with PRDX3 to regulate the activation of NF-kappa-B in the cytosol. This activation is kinase-dependent and involves activating the IKK complex, the IKBKB-containing complex that phosphorylates inhibitors of NF-kappa-B. The sequence is that of Mitogen-activated protein kinase kinase kinase 13 from Homo sapiens (Human).